The sequence spans 772 residues: Transducin-like enhancer protein 4 (772 aa).

2 disordered regions span residues 1–24 and 183–359; these read MIRD…PAQP and LPIK…LTGL. Residues 1 to 137 are q domain; the sequence is MIRDLSKMYP…AIIGQQLQAQ (137 aa). Residues 138–205 form a GP domain region; sequence HLSHAHGLPV…HQRDRDSIKS (68 aa). The segment covering 184–203 has biased composition (basic and acidic residues); it reads PIKDEKKHHDSDHQRDRDSI. Positions 204 to 213 are enriched in low complexity; sequence KSSSVSPSAS. The tract at residues 206–275 is ccN domain; that stretch reads SSVSPSASFR…SPRGSPAHSP (70 aa). Basic and acidic residues-rich tracts occupy residues 216-253 and 274-290; these read AAEK…KSDD and SPRE…KKDA. Residues 276–452 are SP domain; sequence RENGLDKPRL…GGKPAYSFHV (177 aa). Over residues 291 to 306 the composition is skewed to low complexity; sequence PISPASIASSSSTPSS. The span at 307-316 shows a compositional bias: basic and acidic residues; that stretch reads KSKEHSHNEK. Residues 318-329 are compositionally biased toward polar residues; the sequence is TTPVSKSNTPTP. WD repeat units lie at residues 484–522, 530–569, 574–613, 616–655, 657–696, 698–737, and 739–772; these read NHGE…NKSP, NRDN…PRIK, SSAP…LVRQ, GHTD…QLQQ, DFTS…KYQL, LHES…SIFQ, and KESS…EVIY.

This sequence belongs to the WD repeat Groucho/TLE family. Interacts with tcf7, tcf7l1, ripply2.2/bowline, dscr6/ripply3 and foxd3. Associates with tbx6 in the presence of ripply2.2/bowline. Interacts with EFNB1 through the SP domain. In terms of processing, ubiquitinated by XIAP/BIRC4. In terms of tissue distribution, expressed at high levels in the spleen and ovary.

Its subcellular location is the nucleus. Its function is as follows. Transcriptional corepressor. Functions with ripply2.2/bowline to down regulate transcription of tbx6-dependent gene expression. Represses transcription of siamois and nodal3. The chain is Transducin-like enhancer protein 4 (tle4) from Xenopus laevis (African clawed frog).